The sequence spans 161 residues: Lipoprotein signal peptidase (161 aa).

Helical transmembrane passes span 64–84 (YRVPFFIITTSVAVVFLAWFY) and 92–114 (VLGRCAVSLVLGGAIGNLIDRVR). Active-site residues include Asp120 and Asp138. Residues 131 to 151 (WPAFNVADSAICVGVGMLLLA) traverse the membrane as a helical segment.

The protein belongs to the peptidase A8 family.

Its subcellular location is the cell inner membrane. The catalysed reaction is Release of signal peptides from bacterial membrane prolipoproteins. Hydrolyzes -Xaa-Yaa-Zaa-|-(S,diacylglyceryl)Cys-, in which Xaa is hydrophobic (preferably Leu), and Yaa (Ala or Ser) and Zaa (Gly or Ala) have small, neutral side chains.. The protein operates within protein modification; lipoprotein biosynthesis (signal peptide cleavage). Its function is as follows. This protein specifically catalyzes the removal of signal peptides from prolipoproteins. The protein is Lipoprotein signal peptidase of Syntrophotalea carbinolica (strain DSM 2380 / NBRC 103641 / GraBd1) (Pelobacter carbinolicus).